Here is a 447-residue protein sequence, read N- to C-terminus: N-succinylarginine dihydrolase (447 aa).

Substrate contacts are provided by residues 19 to 28, Asn-110, and 137 to 138; these read AGLSFGNEAS and HR. Glu-174 is an active-site residue. Residue Arg-213 participates in substrate binding. Residue His-249 is part of the active site. 2 residues coordinate substrate: Asp-251 and Asn-364. Cys-370 acts as the Nucleophile in catalysis.

The protein belongs to the succinylarginine dihydrolase family. Homodimer.

It catalyses the reaction N(2)-succinyl-L-arginine + 2 H2O + 2 H(+) = N(2)-succinyl-L-ornithine + 2 NH4(+) + CO2. It participates in amino-acid degradation; L-arginine degradation via AST pathway; L-glutamate and succinate from L-arginine: step 2/5. Its function is as follows. Catalyzes the hydrolysis of N(2)-succinylarginine into N(2)-succinylornithine, ammonia and CO(2). This is N-succinylarginine dihydrolase from Yersinia pestis bv. Antiqua (strain Antiqua).